Here is a 280-residue protein sequence, read N- to C-terminus: 4-diphosphocytidyl-2-C-methyl-D-erythritol kinase (280 aa).

Lysine 9 is a catalytic residue. 93-103 (PVAAGLGGGSS) lines the ATP pocket. Residue aspartate 135 is part of the active site.

This sequence belongs to the GHMP kinase family. IspE subfamily.

It catalyses the reaction 4-CDP-2-C-methyl-D-erythritol + ATP = 4-CDP-2-C-methyl-D-erythritol 2-phosphate + ADP + H(+). It participates in isoprenoid biosynthesis; isopentenyl diphosphate biosynthesis via DXP pathway; isopentenyl diphosphate from 1-deoxy-D-xylulose 5-phosphate: step 3/6. Its function is as follows. Catalyzes the phosphorylation of the position 2 hydroxy group of 4-diphosphocytidyl-2C-methyl-D-erythritol. This chain is 4-diphosphocytidyl-2-C-methyl-D-erythritol kinase, found in Syntrophotalea carbinolica (strain DSM 2380 / NBRC 103641 / GraBd1) (Pelobacter carbinolicus).